Reading from the N-terminus, the 167-residue chain is Antibacterial peptide PMAP-37 (167 aa).

The N-terminal stretch at 1–29 (METQRASLCLGRWSLWLLLLALVVPSASA) is a signal peptide. The propeptide occupies 30–130 (QALSYREAVL…DITCNEIQSV (101 aa)). Intrachain disulfides connect Cys85–Cys96 and Cys107–Cys124.

Belongs to the cathelicidin family.

It is found in the secreted. Its function is as follows. Exerts antimicrobial activity against both Gram-positive and negative bacteria with minimal inhibitory concentrations ranging over 1-4 micro molar. Its activity appears to be mediated by its ability to damage bacterial membranes. This chain is Antibacterial peptide PMAP-37 (PMAP37), found in Sus scrofa (Pig).